We begin with the raw amino-acid sequence, 177 residues long: Large ribosomal subunit protein uL10 (177 aa).

Belongs to the universal ribosomal protein uL10 family. In terms of assembly, part of the ribosomal stalk of the 50S ribosomal subunit. The N-terminus interacts with L11 and the large rRNA to form the base of the stalk. The C-terminus forms an elongated spine to which L12 dimers bind in a sequential fashion forming a multimeric L10(L12)X complex.

Forms part of the ribosomal stalk, playing a central role in the interaction of the ribosome with GTP-bound translation factors. The chain is Large ribosomal subunit protein uL10 from Thermoanaerobacter sp. (strain X514).